The following is a 200-amino-acid chain: 3-isopropylmalate dehydratase small subunit (200 aa).

This sequence belongs to the LeuD family. LeuD type 1 subfamily. Heterodimer of LeuC and LeuD.

It catalyses the reaction (2R,3S)-3-isopropylmalate = (2S)-2-isopropylmalate. Its pathway is amino-acid biosynthesis; L-leucine biosynthesis; L-leucine from 3-methyl-2-oxobutanoate: step 2/4. In terms of biological role, catalyzes the isomerization between 2-isopropylmalate and 3-isopropylmalate, via the formation of 2-isopropylmaleate. This chain is 3-isopropylmalate dehydratase small subunit, found in Vibrio vulnificus (strain YJ016).